The sequence spans 310 residues: 26S proteasome non-ATPase regulatory subunit 7 homolog B (310 aa).

Position 1 is an N-acetylmethionine (Met1). The 138-residue stretch at 17-154 (VIVHPLVLLS…YYAVEEVKEN (138 aa)) folds into the MPN domain.

Belongs to the peptidase M67A family. As to quaternary structure, component of the 19S regulatory particle (RP/PA700) lid subcomplex of the 26S proteasome. The 26S proteasome is composed of a core protease (CP), known as the 20S proteasome, capped at one or both ends by the 19S regulatory particle (RP/PA700). The RP/PA700 complex is composed of at least 17 different subunits in two subcomplexes, the base and the lid, which form the portions proximal and distal to the 20S proteolytic core, respectively.

Acts as a regulatory subunit of the 26S proteasome which is involved in the ATP-dependent degradation of ubiquitinated proteins. This Arabidopsis thaliana (Mouse-ear cress) protein is 26S proteasome non-ATPase regulatory subunit 7 homolog B (RPN8B).